A 314-amino-acid chain; its full sequence is Ribosomal RNA small subunit methyltransferase H (314 aa).

S-adenosyl-L-methionine is bound by residues 31-33, aspartate 49, phenylalanine 76, aspartate 118, and glutamine 125; that span reads GGY.

The protein belongs to the methyltransferase superfamily. RsmH family.

The protein resides in the cytoplasm. The enzyme catalyses cytidine(1402) in 16S rRNA + S-adenosyl-L-methionine = N(4)-methylcytidine(1402) in 16S rRNA + S-adenosyl-L-homocysteine + H(+). Specifically methylates the N4 position of cytidine in position 1402 (C1402) of 16S rRNA. This chain is Ribosomal RNA small subunit methyltransferase H, found in Wolbachia pipientis wMel.